A 162-amino-acid chain; its full sequence is NADH-ubiquinone oxidoreductase subunit 8 (162 aa).

2 4Fe-4S ferredoxin-type domains span residues 54–83 (RRYQTGEERCIACKLCEAICPAQAITIESE) and 93–122 (TRYDIDMTKCIYCGFCQEACPVDAIVEGPN). The [4Fe-4S] cluster site is built by Cys63, Cys66, Cys69, Cys73, Cys102, Cys105, Cys108, and Cys112.

The protein belongs to the complex I 23 kDa subunit family. Requires [4Fe-4S] cluster as cofactor.

Its subcellular location is the mitochondrion. The enzyme catalyses a ubiquinone + NADH + 5 H(+)(in) = a ubiquinol + NAD(+) + 4 H(+)(out). Functionally, core subunit of the mitochondrial membrane respiratory chain NADH dehydrogenase (Complex I) that is believed to belong to the minimal assembly required for catalysis. Complex I functions in the transfer of electrons from NADH to the respiratory chain. The immediate electron acceptor for the enzyme is believed to be ubiquinone. May donate electrons to ubiquinone. The sequence is that of NADH-ubiquinone oxidoreductase subunit 8 (NAD8) from Reclinomonas americana.